We begin with the raw amino-acid sequence, 757 residues long: MMPISATIDSKSFPFDTTPTYASLDAYQMDQRALPTSPFNGAVKRDQMFDQLLLDPPSPTTSRFDGMWPTSNAQANASSSWTPSAGMPDAFDGVGNSLVNDASSDWSDFLMPLLATVATDFSSGSATKSEPSTCSSSTDFSMSSTADASTAPQHSSSGDSSMSSGLPVSTATCTAMPAAQNHQVTTQDASVQPKLEKQCQPPSHNVNQQNAFASSNQDNNCPQVHIIASWLDQDADRNTGHRQHNRHQKQQNLPQGQSCTNSGSSSRQVTRPNSPNHQRSRPQLRSRSSTGNGYTWPSVDPQVFLWAAFMMNGFQQAQAGTATASPMSDYSAMEYDDEPQAQHGYHATENCNVDDAMDGTGDFCKKEDRSQSADCGLLPRPPSNSPEPHPYPLDPMAAFARAAAESMAMSYSWPMPMPTNMMELQHNPARSNSTFGRVSQRHHQPPPSHRQRSRTSASSISNTNAAHRKHKVDAVRQSAVRSRRQSFVEPRQCASQSPSSPSESTAATDAKLTKPRAQSAGRSHVTERLPHLHTLSYSTPPDTSSSVSALTSTTTTTVSTGASSVASSISGPSSASSGIGNASGSLSFTITDKIVLKPRPGSGDEELAYPCATNSLLEMQNNEGPIVDAQQQAEEAVEKVQNLFPSDLYAPRFTRRGTCGREGWCSLCPQGEWYSMKRSQYLYHMQFDHGISNLTRRLFHPPQTLRVWNDAVSKTDGLCHHCNKWIPICFGPQRKRDFKAWFKHARKCHRDDTGCPI.

Disordered stretches follow at residues 122–169, 181–218, 237–295, 372–393, and 422–582; these read SSGS…LPVS, NHQVTTQDASVQPKLEKQCQPPSHNVNQQNAFASSNQD, RNTG…NGYT, SADCGLLPRPPSNSPEPHPYPL, and MELQ…IGNA. The span at 125–165 shows a compositional bias: low complexity; the sequence is SATKSEPSTCSSSTDFSMSSTADASTAPQHSSSGDSSMSSG. Polar residues-rich tracts occupy residues 181-190 and 200-218; these read NHQVTTQDAS and QPPSHNVNQQNAFASSNQD. Basic residues predominate over residues 240–249; it reads GHRQHNRHQK. Over residues 253 to 277 the composition is skewed to polar residues; the sequence is LPQGQSCTNSGSSSRQVTRPNSPNH. Positions 379-393 are enriched in pro residues; that stretch reads PRPPSNSPEPHPYPL. A compositionally biased stretch (polar residues) spans 428 to 437; that stretch reads PARSNSTFGR. Over residues 439 to 453 the composition is skewed to basic residues; the sequence is SQRHHQPPPSHRQRS. Composition is skewed to low complexity over residues 454-465, 494-510, and 543-582; these read RTSASSISNTNA, ASQSPSSPSESTAATDA, and TSSSVSALTSTTTTTVSTGASSVASSISGPSSASSGIGNA. The C2H2-type 1 degenerate zinc finger occupies 661-692; the sequence is REGWCSLCPQGEWYSMKRSQYLYHMQFDHGIS. A C2H2-type 2; degenerate zinc finger spans residues 717 to 750; that stretch reads GLCHHCNKWIPICFGPQRKRDFKAWFKHARKCHR.

Its subcellular location is the nucleus. Its function is as follows. Transcription factor; part of the gene cluster that mediates the biosynthesis of the glycolipid biosurfactant ustilagic acid (UA). UA is a secreted cellobiose glycolipid that is toxic for many microorganisms and confers biocontrol activity to U.maydis. Recognizes and binds to the specific 5'-T/G-G/T-C-G-C-A-T-A/T-C/T-C/T-G/A-3' upstream activating sequence found in all promoters of the UA biosynthesis genes. The sequence is that of Transcription regulator rua1 from Mycosarcoma maydis (Corn smut fungus).